A 288-amino-acid polypeptide reads, in one-letter code: Probable endonuclease 4 (288 aa).

9 residues coordinate Zn(2+): H75, H115, E153, D187, H190, H224, D237, H239, and E269.

Belongs to the AP endonuclease 2 family. The cofactor is Zn(2+).

The catalysed reaction is Endonucleolytic cleavage to 5'-phosphooligonucleotide end-products.. Its function is as follows. Endonuclease IV plays a role in DNA repair. It cleaves phosphodiester bonds at apurinic or apyrimidinic (AP) sites, generating a 3'-hydroxyl group and a 5'-terminal sugar phosphate. The polypeptide is Probable endonuclease 4 (Chlamydia trachomatis serovar L2 (strain ATCC VR-902B / DSM 19102 / 434/Bu)).